The sequence spans 143 residues: Periplasmic nitrate reductase, electron transfer subunit (143 aa).

The first 22 residues, 1 to 22 (MKKILTLAAIVLAIGGCSGQQA), serve as a signal peptide directing secretion. The heme c site is built by His72, Cys85, Cys88, His89, His106, Cys121, Cys124, and His125.

It belongs to the NapB family. In terms of assembly, component of the periplasmic nitrate reductase NapAB complex composed of NapA and NapB. Binds 2 heme C groups per subunit.

Its subcellular location is the periplasm. Its function is as follows. Electron transfer subunit of the periplasmic nitrate reductase complex NapAB. Receives electrons from the membrane-anchored tetraheme c-type CymA protein and transfers these to NapA subunit, thus allowing electron flow between membrane and periplasm. Not essential for nitrate reduction but confers advantage to the organism when grown on nitrate and thereby a fitness gain in utilizing nitrate. This chain is Periplasmic nitrate reductase, electron transfer subunit, found in Shewanella oneidensis (strain ATCC 700550 / JCM 31522 / CIP 106686 / LMG 19005 / NCIMB 14063 / MR-1).